The primary structure comprises 273 residues: Formamidopyrimidine-DNA glycosylase (273 aa).

P2 acts as the Schiff-base intermediate with DNA in catalysis. E3 serves as the catalytic Proton donor. The active-site Proton donor; for beta-elimination activity is the K58. Residues H91 and R110 each coordinate DNA. The FPG-type zinc finger occupies 238 to 272 (QVYGKTGQPCPRCGCLIKKIKVGGRGTHYCPRCQC). Catalysis depends on R262, which acts as the Proton donor; for delta-elimination activity.

Belongs to the FPG family. In terms of assembly, monomer. Zn(2+) serves as cofactor.

The catalysed reaction is Hydrolysis of DNA containing ring-opened 7-methylguanine residues, releasing 2,6-diamino-4-hydroxy-5-(N-methyl)formamidopyrimidine.. The enzyme catalyses 2'-deoxyribonucleotide-(2'-deoxyribose 5'-phosphate)-2'-deoxyribonucleotide-DNA = a 3'-end 2'-deoxyribonucleotide-(2,3-dehydro-2,3-deoxyribose 5'-phosphate)-DNA + a 5'-end 5'-phospho-2'-deoxyribonucleoside-DNA + H(+). Its function is as follows. Involved in base excision repair of DNA damaged by oxidation or by mutagenic agents. Acts as a DNA glycosylase that recognizes and removes damaged bases. Has a preference for oxidized purines, such as 7,8-dihydro-8-oxoguanine (8-oxoG). Has AP (apurinic/apyrimidinic) lyase activity and introduces nicks in the DNA strand. Cleaves the DNA backbone by beta-delta elimination to generate a single-strand break at the site of the removed base with both 3'- and 5'-phosphates. This chain is Formamidopyrimidine-DNA glycosylase, found in Streptococcus agalactiae serotype Ia (strain ATCC 27591 / A909 / CDC SS700).